A 200-amino-acid polypeptide reads, in one-letter code: 3-isopropylmalate dehydratase small subunit (200 aa).

This sequence belongs to the LeuD family. LeuD type 1 subfamily. Heterodimer of LeuC and LeuD.

It carries out the reaction (2R,3S)-3-isopropylmalate = (2S)-2-isopropylmalate. It participates in amino-acid biosynthesis; L-leucine biosynthesis; L-leucine from 3-methyl-2-oxobutanoate: step 2/4. In terms of biological role, catalyzes the isomerization between 2-isopropylmalate and 3-isopropylmalate, via the formation of 2-isopropylmaleate. The protein is 3-isopropylmalate dehydratase small subunit of Yersinia pseudotuberculosis serotype O:1b (strain IP 31758).